Consider the following 1605-residue polypeptide: Zinc finger protein jing homolog (1605 aa).

The span at 1-15 (MQHQSLSVRNSSGIS) shows a compositional bias: polar residues. Disordered regions lie at residues 1–28 (MQHQSLSVRNSSGISGNRDENFPSVRSS), 60–117 (QWPW…QQSN), 359–388 (TRKVSHSPQGGLGVGQPKKPVTIAPRTSDP), 441–468 (QQHQQSTQTQQQTSQNQSQPQQNQTQAQ), 856–877 (STTSSKPPPPIKPISSTEPPKL), 917–947 (TKATSTTPIKDKPKPNLPMSEPPALAPASCT), and 991–1213 (NDSG…TDFL). Residues 64–117 (NTSNNTNATNSNNVQSNNNSSTATSNSSTNSNNSPAVNTPTTQNQSQPTTQQSN) show a composition bias toward low complexity. Over residues 991 to 1000 (NDSGIVANSS) the composition is skewed to polar residues. Over residues 1021–1030 (PQKKDEESRQ) the composition is skewed to basic and acidic residues. Over residues 1035-1049 (SPVPSPSPLSEPPVI) the composition is skewed to pro residues. Acidic residues-rich tracts occupy residues 1053–1090 (SEPEPEPEPELEPEPEMEPEPETEPEPEVEPEPEDEPH) and 1099–1110 (SSEAVELPELED). Positions 1112–1126 (QPSPPLPCELPPPPT) are enriched in pro residues. Over residues 1135 to 1149 (LSLPPSQKSPKSLLL) the composition is skewed to low complexity. A compositionally biased stretch (polar residues) spans 1165-1201 (QESMSSDQDYSNQSPLDESSPTGSAEPSESQRSTTPV). The segment at 1260-1285 (GVCYWSNCDAQFDTSSKLLDHLQIQH) adopts a C2H2-type 1 zinc-finger fold. The C2H2-type 2; degenerate zinc finger occupies 1293–1320 (FACLWDGCKVHNKESCSRRWLERHVLSH). The C2H2-type 3 zinc-finger motif lies at 1326 to 1350 (HKCIVAGCGMRFGSQLALEKHVNHH). Disordered regions lie at residues 1352–1371 (NNTDNASAGKRSSDPPLPKV) and 1511–1605 (CSRS…SSTS). Low complexity-rich tracts occupy residues 1511-1537 (CSRSSFSSSSSSSSSSGCSSASSSLIS) and 1556-1605 (KQSY…SSTS).

The protein belongs to the AEBP2/jing C2H2-type zinc-finger family.

Its subcellular location is the nucleus. In terms of biological role, may functionally interact with Polycomb group (PcG) and trithorax group (trxG) proteins to repress transcription. The sequence is that of Zinc finger protein jing homolog from Aedes aegypti (Yellowfever mosquito).